The chain runs to 310 residues: Mas-related G-protein coupled receptor member E (310 aa).

Residues 1–22 (MTSLSVHTDSPSTQGEMAFNLT) lie on the Extracellular side of the membrane. N20 carries an N-linked (GlcNAc...) asparagine glycan. Residues 23 to 43 (ILSLTELLSLGGLLGNGVALW) traverse the membrane as a helical segment. At 44–60 (LLNQNVYRNPFSIYLLD) the chain is on the cytoplasmic side. Residues 61 to 81 (VACADLIFLCCHMVAIIPELL) form a helical membrane-spanning segment. At 82 to 92 (QDQLNFPEFVH) the chain is on the extracellular side. A helical membrane pass occupies residues 93–113 (ISLTMLRFFCYIVGLSLLAAI). Topologically, residues 114–133 (STEQCLATLFPAWYLCRRPR) are cytoplasmic. Residues 134–154 (YLTTCVCALIWVLCLLLDLLL) form a helical membrane-spanning segment. The Extracellular portion of the chain corresponds to 155-174 (SGACTQFFGAPSYHLCDMLW). The helical transmembrane segment at 175–195 (LVVAVLLAALCCTMCVTSLLL) threads the bilayer. The Cytoplasmic portion of the chain corresponds to 196–213 (LLRVERGPERHQPRGFPT). The helical transmembrane segment at 214 to 234 (LVLLAVLLFLFCGLPFGIFWL) threads the bilayer. Residues 235–248 (SKNLSWHIPLYFYH) are Extracellular-facing. Residue N237 is glycosylated (N-linked (GlcNAc...) asparagine). Residues 249-269 (FSFFMASVHSAAKPAIYFFLG) traverse the membrane as a helical segment. Topologically, residues 270–310 (STPGQRFREPLRLVLQRALGDEAELGAGREASQGGLVDMTV) are cytoplasmic.

Belongs to the G-protein coupled receptor 1 family. Mas subfamily.

The protein resides in the cell membrane. In terms of biological role, orphan receptor. May regulate nociceptor function and/or development, including the sensation or modulation of pain. The sequence is that of Mas-related G-protein coupled receptor member E (Mrgpre) from Mus musculus (Mouse).